The sequence spans 382 residues: Inactive anthranilate O-methyltransferase 1 (382 aa).

Residues Y20, C61, N66, D102, L103, S146, and Y147 each coordinate S-adenosyl-L-homocysteine. Mg(2+)-binding residues include E268 and F270.

It belongs to the methyltransferase superfamily. Type-7 methyltransferase family. SABATH subfamily.

The sequence is that of Inactive anthranilate O-methyltransferase 1 (AAMT1I) from Zea mays (Maize).